Consider the following 814-residue polypeptide: ATP-dependent RNA helicase dbp-7 (814 aa).

The disordered stretch occupies residues 26 to 102 (GGRWRDRVKA…PPPPPTHAMK (77 aa)). Basic and acidic residues-rich tracts occupy residues 28–42 (RWRD…EKGG) and 69–78 (QRTEDGDSGR). The short motif at 145–174 (ENFLSLGLSRRVSQHLATKLEMKAPTAIQK) is the Q motif element. The Helicase ATP-binding domain maps to 178-384 (PQLVKEDSDA…EISLEDAVHI (207 aa)). 191-198 (AETGSGKT) is an ATP binding site. The DEAD box signature appears at 313-316 (DEGD). In terms of domain architecture, Helicase C-terminal spans 422–622 (RLVTLIALLK…GFATNINVPG (201 aa)). Disordered stretches follow at residues 464-483 (TPRA…KPNI), 662-695 (ESKS…PLLV), and 741-795 (GIGG…AGRR). Residues 467 to 477 (AEPEPKPEGEA) show a composition bias toward basic and acidic residues. Residues 779–790 (DDDERDFGAADE) show a composition bias toward acidic residues.

It belongs to the DEAD box helicase family. DDX31/DBP7 subfamily.

It is found in the nucleus. The protein resides in the nucleolus. It carries out the reaction ATP + H2O = ADP + phosphate + H(+). Functionally, ATP-binding RNA helicase involved in the biogenesis of 60S ribosomal subunits and is required for the normal formation of 25S and 5.8S rRNAs. The protein is ATP-dependent RNA helicase dbp-7 (dbp-7) of Neurospora crassa (strain ATCC 24698 / 74-OR23-1A / CBS 708.71 / DSM 1257 / FGSC 987).